The following is a 437-amino-acid chain: Cobyrinate a,c-diamide synthase (437 aa).

Residues 241-430 form the GATase cobBQ-type domain; the sequence is KIAVAKDEAF…AHVHFFGNLD (190 aa). The Nucleophile role is filled by Cys323.

It belongs to the CobB/CbiA family. Requires Mg(2+) as cofactor.

The enzyme catalyses cob(II)yrinate + 2 L-glutamine + 2 ATP + 2 H2O = cob(II)yrinate a,c diamide + 2 L-glutamate + 2 ADP + 2 phosphate + 2 H(+). Its pathway is cofactor biosynthesis; adenosylcobalamin biosynthesis; cob(II)yrinate a,c-diamide from sirohydrochlorin (anaerobic route): step 10/10. Functionally, catalyzes the ATP-dependent amidation of the two carboxylate groups at positions a and c of cobyrinate, using either L-glutamine or ammonia as the nitrogen source. In Clostridium acetobutylicum (strain ATCC 824 / DSM 792 / JCM 1419 / IAM 19013 / LMG 5710 / NBRC 13948 / NRRL B-527 / VKM B-1787 / 2291 / W), this protein is Cobyrinate a,c-diamide synthase.